Here is a 299-residue protein sequence, read N- to C-terminus: Quinolinate synthase (299 aa).

Residues histidine 21 and serine 38 each contribute to the iminosuccinate site. [4Fe-4S] cluster is bound at residue cysteine 83. Residues 109-111 (YVN) and serine 126 each bind iminosuccinate. Cysteine 170 contacts [4Fe-4S] cluster. Iminosuccinate-binding positions include 196–198 (HPE) and threonine 213. Cysteine 256 contacts [4Fe-4S] cluster.

This sequence belongs to the quinolinate synthase family. Type 2 subfamily. Requires [4Fe-4S] cluster as cofactor.

The protein resides in the cytoplasm. The catalysed reaction is iminosuccinate + dihydroxyacetone phosphate = quinolinate + phosphate + 2 H2O + H(+). It functions in the pathway cofactor biosynthesis; NAD(+) biosynthesis; quinolinate from iminoaspartate: step 1/1. Catalyzes the condensation of iminoaspartate with dihydroxyacetone phosphate to form quinolinate. The sequence is that of Quinolinate synthase from Pyrococcus abyssi (strain GE5 / Orsay).